A 447-amino-acid chain; its full sequence is UDP-N-acetylglucosamine 1-carboxyvinyltransferase (447 aa).

Phosphoenolpyruvate is bound at residue 27 to 28 (KN). Residue arginine 97 participates in UDP-N-acetyl-alpha-D-glucosamine binding. Residue cysteine 121 is the Proton donor of the active site. Cysteine 121 bears the 2-(S-cysteinyl)pyruvic acid O-phosphothioketal mark. UDP-N-acetyl-alpha-D-glucosamine-binding positions include 126-130 (RPVDL), aspartate 314, and valine 336.

This sequence belongs to the EPSP synthase family. MurA subfamily.

The protein resides in the cytoplasm. The catalysed reaction is phosphoenolpyruvate + UDP-N-acetyl-alpha-D-glucosamine = UDP-N-acetyl-3-O-(1-carboxyvinyl)-alpha-D-glucosamine + phosphate. It functions in the pathway cell wall biogenesis; peptidoglycan biosynthesis. Its function is as follows. Cell wall formation. Adds enolpyruvyl to UDP-N-acetylglucosamine. The polypeptide is UDP-N-acetylglucosamine 1-carboxyvinyltransferase (Trichormus variabilis (strain ATCC 29413 / PCC 7937) (Anabaena variabilis)).